The following is a 224-amino-acid chain: Flagellar L-ring protein (224 aa).

The signal sequence occupies residues 1-15 (MARYLVLAVALLLAA). Cysteine 16 carries N-palmitoyl cysteine lipidation. Cysteine 16 is lipidated: S-diacylglycerol cysteine.

This sequence belongs to the FlgH family. As to quaternary structure, the basal body constitutes a major portion of the flagellar organelle and consists of four rings (L,P,S, and M) mounted on a central rod.

The protein localises to the cell outer membrane. It is found in the bacterial flagellum basal body. Assembles around the rod to form the L-ring and probably protects the motor/basal body from shearing forces during rotation. In Shewanella baltica (strain OS185), this protein is Flagellar L-ring protein.